The sequence spans 376 residues: Ribosomal RNA large subunit methyltransferase G (376 aa).

Belongs to the methyltransferase superfamily. RlmG family.

It localises to the cytoplasm. The enzyme catalyses guanosine(1835) in 23S rRNA + S-adenosyl-L-methionine = N(2)-methylguanosine(1835) in 23S rRNA + S-adenosyl-L-homocysteine + H(+). Its function is as follows. Specifically methylates the guanine in position 1835 (m2G1835) of 23S rRNA. This chain is Ribosomal RNA large subunit methyltransferase G, found in Cronobacter sakazakii (strain ATCC BAA-894) (Enterobacter sakazakii).